The sequence spans 176 residues: NAD(P)H-quinone oxidoreductase subunit 6, chloroplastic (176 aa).

The next 5 helical transmembrane spans lie at 10–30, 32–52, 61–81, 92–112, and 152–172; these read FLLVFLGSGLLVGGLGVVLLP, PIFSAFSLGFVLVCISLLYIL, AQLLIYVGAINVLIIFAVMFM, LWTVGNGITSLVCTTILFSLM, and FFLPFELISIILLVALIGAIS.

Belongs to the complex I subunit 6 family. NDH is composed of at least 16 different subunits, 5 of which are encoded in the nucleus.

It localises to the plastid. The protein localises to the chloroplast thylakoid membrane. The catalysed reaction is a plastoquinone + NADH + (n+1) H(+)(in) = a plastoquinol + NAD(+) + n H(+)(out). The enzyme catalyses a plastoquinone + NADPH + (n+1) H(+)(in) = a plastoquinol + NADP(+) + n H(+)(out). In terms of biological role, NDH shuttles electrons from NAD(P)H:plastoquinone, via FMN and iron-sulfur (Fe-S) centers, to quinones in the photosynthetic chain and possibly in a chloroplast respiratory chain. The immediate electron acceptor for the enzyme in this species is believed to be plastoquinone. Couples the redox reaction to proton translocation, and thus conserves the redox energy in a proton gradient. This chain is NAD(P)H-quinone oxidoreductase subunit 6, chloroplastic (ndhG), found in Barbarea verna (Land cress).